The chain runs to 332 residues: uncharacterized protein (332 aa).

Residues 1-32 (MSRDRGARGLRKYGRFALATGAATALSLTASG) form the signal peptide. Cys-33 is lipidated: N-palmitoyl cysteine. Cys-33 carries the S-diacylglycerol cysteine lipid modification.

Its subcellular location is the cell membrane. This is an uncharacterized protein from Streptomyces avermitilis (strain ATCC 31267 / DSM 46492 / JCM 5070 / NBRC 14893 / NCIMB 12804 / NRRL 8165 / MA-4680).